Here is a 312-residue protein sequence, read N- to C-terminus: Homoserine O-succinyltransferase (312 aa).

The Acyl-thioester intermediate role is filled by Cys142. Residues Lys163 and Ser192 each coordinate substrate. The Proton acceptor role is filled by His235. Residue Glu237 is part of the active site. Arg249 lines the substrate pocket.

This sequence belongs to the MetA family.

The protein resides in the cytoplasm. The enzyme catalyses L-homoserine + succinyl-CoA = O-succinyl-L-homoserine + CoA. It functions in the pathway amino-acid biosynthesis; L-methionine biosynthesis via de novo pathway; O-succinyl-L-homoserine from L-homoserine: step 1/1. Functionally, transfers a succinyl group from succinyl-CoA to L-homoserine, forming succinyl-L-homoserine. This is Homoserine O-succinyltransferase from Shewanella halifaxensis (strain HAW-EB4).